A 213-amino-acid polypeptide reads, in one-letter code: MHVHVVEHPLAAARLTTLRDARSDNAAFRTALRDLTLMLVYEATGSVPVESSTVRTPVAETTGYRLANPPLLVPVLRAGLGMVDQAHALIPEARVGFVGMARDEDTWQPTPYLESLPADLSAQPVFVLDPMLATGGSMVYTLELLHARGAADITMLCVVAAPQGVTAIQECAERFGPSTSVRLFTATIDEGLNDAAYIVPGLGDAGDRQFGPR.

5-phospho-alpha-D-ribose 1-diphosphate-binding positions include Arg-77, Arg-102, and 129-137 (DPMLATGGS). Uracil contacts are provided by residues Ile-198 and 203 to 205 (GDA). Asp-204 lines the 5-phospho-alpha-D-ribose 1-diphosphate pocket.

The protein belongs to the UPRTase family. The cofactor is Mg(2+).

The catalysed reaction is UMP + diphosphate = 5-phospho-alpha-D-ribose 1-diphosphate + uracil. It functions in the pathway pyrimidine metabolism; UMP biosynthesis via salvage pathway; UMP from uracil: step 1/1. With respect to regulation, allosterically activated by GTP. Its function is as follows. Catalyzes the conversion of uracil and 5-phospho-alpha-D-ribose 1-diphosphate (PRPP) to UMP and diphosphate. The sequence is that of Uracil phosphoribosyltransferase from Mycobacteroides abscessus (strain ATCC 19977 / DSM 44196 / CCUG 20993 / CIP 104536 / JCM 13569 / NCTC 13031 / TMC 1543 / L948) (Mycobacterium abscessus).